Here is a 144-residue protein sequence, read N- to C-terminus: Transcriptional regulator SlyA (144 aa).

In terms of domain architecture, HTH marR-type spans 2-135; the sequence is ESTLGSDLAR…LVGLIGKLEQ (134 aa). Residues 49–72 constitute a DNA-binding region (H-T-H motif); that stretch reads QIQLAKAIGIEQPSLVRTLDQLEE.

This sequence belongs to the SlyA family. As to quaternary structure, homodimer.

Its function is as follows. Transcription regulator that can specifically activate or repress expression of target genes. The protein is Transcriptional regulator SlyA of Serratia proteamaculans (strain 568).